Here is a 210-residue protein sequence, read N- to C-terminus: Sortase A (210 aa).

At 1-5 the chain is on the cytoplasmic side; it reads MNKQR. Residues 6–26 form a helical membrane-spanning segment; it reads IYSIVAILLFVVGGVLIGKPF. Residues 27–210 lie on the Extracellular side of the membrane; sequence YDGYQAEKKQ…GDLVGTKAKK (184 aa). Residue His-126 is the Proton donor/acceptor of the active site. Cys-187 (acyl-thioester intermediate) is an active-site residue.

It belongs to the bacterial sortase family. Class A subfamily.

The protein resides in the cell membrane. With respect to regulation, inhibited by thiol-reactive reagents. Functionally, transpeptidase that anchors surface proteins to the cell wall. Recognizes and modifies its substrate by proteolytic cleavage of a C-terminal sorting signal. Following cleavage, a covalent intermediate is formed via a thioester bond between the sortase and its substrate, which is then transferred and covalently attached to the cell wall. This sortase recognizes a Leu-Pro-x-Thr-Gly (LPXTG) motif, which is cleaved by the sortase between the threonine and glycine residues. Important for growth in macrophages. May be critical in the early stages of inhalation anthrax. The sequence is that of Sortase A from Bacillus anthracis.